We begin with the raw amino-acid sequence, 285 residues long: ATP synthase gamma chain (285 aa).

It belongs to the ATPase gamma chain family. As to quaternary structure, F-type ATPases have 2 components, CF(1) - the catalytic core - and CF(0) - the membrane proton channel. CF(1) has five subunits: alpha(3), beta(3), gamma(1), delta(1), epsilon(1). CF(0) has three main subunits: a, b and c.

It localises to the cell membrane. In terms of biological role, produces ATP from ADP in the presence of a proton gradient across the membrane. The gamma chain is believed to be important in regulating ATPase activity and the flow of protons through the CF(0) complex. The protein is ATP synthase gamma chain of Dehalococcoides mccartyi (strain CBDB1).